The chain runs to 75 residues: Small ribosomal subunit protein bS18c (75 aa).

It belongs to the bacterial ribosomal protein bS18 family. In terms of assembly, part of the 30S ribosomal subunit.

It localises to the plastid. Its subcellular location is the chloroplast. This is Small ribosomal subunit protein bS18c from Psilotum nudum (Whisk fern).